The chain runs to 311 residues: Aspartate carbamoyltransferase catalytic subunit (311 aa).

Carbamoyl phosphate-binding residues include Arg-55 and Thr-56. Residue Lys-85 coordinates L-aspartate. The carbamoyl phosphate site is built by Arg-106, His-135, and Gln-138. Residues Arg-168 and Arg-230 each coordinate L-aspartate. The carbamoyl phosphate site is built by Leu-268 and Pro-269.

This sequence belongs to the aspartate/ornithine carbamoyltransferase superfamily. ATCase family. As to quaternary structure, heterododecamer (2C3:3R2) of six catalytic PyrB chains organized as two trimers (C3), and six regulatory PyrI chains organized as three dimers (R2).

It carries out the reaction carbamoyl phosphate + L-aspartate = N-carbamoyl-L-aspartate + phosphate + H(+). It functions in the pathway pyrimidine metabolism; UMP biosynthesis via de novo pathway; (S)-dihydroorotate from bicarbonate: step 2/3. Functionally, catalyzes the condensation of carbamoyl phosphate and aspartate to form carbamoyl aspartate and inorganic phosphate, the committed step in the de novo pyrimidine nucleotide biosynthesis pathway. This is Aspartate carbamoyltransferase catalytic subunit from Yersinia pseudotuberculosis serotype O:1b (strain IP 31758).